The primary structure comprises 361 residues: Chorismate synthase (361 aa).

The NADP(+) site is built by R48 and R54. FMN contacts are provided by residues 131-133, 243-244, G287, 302-306, and R328; these read RSS, NA, and KPTSS.

The protein belongs to the chorismate synthase family. As to quaternary structure, homotetramer. FMNH2 is required as a cofactor.

It carries out the reaction 5-O-(1-carboxyvinyl)-3-phosphoshikimate = chorismate + phosphate. It functions in the pathway metabolic intermediate biosynthesis; chorismate biosynthesis; chorismate from D-erythrose 4-phosphate and phosphoenolpyruvate: step 7/7. Its function is as follows. Catalyzes the anti-1,4-elimination of the C-3 phosphate and the C-6 proR hydrogen from 5-enolpyruvylshikimate-3-phosphate (EPSP) to yield chorismate, which is the branch point compound that serves as the starting substrate for the three terminal pathways of aromatic amino acid biosynthesis. This reaction introduces a second double bond into the aromatic ring system. The chain is Chorismate synthase from Rhodopseudomonas palustris (strain BisA53).